A 70-amino-acid chain; its full sequence is MKQGIHPDYHAVQVTCSCGNTFVTRSTYNGDHMTVDVCSNCHPFYTGKQKILDTGGRVARFEKRYGKKAK.

Residues Cys16, Cys18, Cys38, and Cys41 each contribute to the Zn(2+) site.

Belongs to the bacterial ribosomal protein bL31 family. Type A subfamily. As to quaternary structure, part of the 50S ribosomal subunit. Zn(2+) is required as a cofactor.

In terms of biological role, binds the 23S rRNA. The sequence is that of Large ribosomal subunit protein bL31 from Bifidobacterium adolescentis (strain ATCC 15703 / DSM 20083 / NCTC 11814 / E194a).